A 1066-amino-acid chain; its full sequence is Zinc finger and BTB domain-containing protein 21 (1066 aa).

The 67-residue stretch at C30–K96 folds into the BTB domain. The mediates homodimerization stretch occupies residues C30–K96. K40 is covalently cross-linked (Glycyl lysine isopeptide (Lys-Gly) (interchain with G-Cter in SUMO1); alternate). Residue K40 forms a Glycyl lysine isopeptide (Lys-Gly) (interchain with G-Cter in SUMO2); alternate linkage. Residues S154–S177 show a composition bias toward polar residues. Residues S154–E196 form a disordered region. Residues K255, K266, K273, K312, and K337 each participate in a glycyl lysine isopeptide (Lys-Gly) (interchain with G-Cter in SUMO2) cross-link. Phosphoserine is present on residues S345 and S381. K383 participates in a covalent cross-link: Glycyl lysine isopeptide (Lys-Gly) (interchain with G-Cter in SUMO2). The segment covering D388–P399 has biased composition (basic and acidic residues). 3 disordered regions span residues D388–D442, T454–R485, and K498–P525. S411 and S422 each carry phosphoserine. Residue K430 forms a Glycyl lysine isopeptide (Lys-Gly) (interchain with G-Cter in SUMO2) linkage. A Phosphothreonine modification is found at T431. Residues S434, S435, and S438 each carry the phosphoserine modification. Residues L466–S478 show a composition bias toward basic and acidic residues. Residues K469 and K475 each participate in a glycyl lysine isopeptide (Lys-Gly) (interchain with G-Cter in SUMO2) cross-link. C2H2-type zinc fingers lie at residues F546–H569 and Y575–H598. Residue S605 is modified to Phosphoserine. Residues K617, K643, and K659 each participate in a glycyl lysine isopeptide (Lys-Gly) (interchain with G-Cter in SUMO2) cross-link. The C2H2-type 3 zinc-finger motif lies at Y670–H692. Residue K702 forms a Glycyl lysine isopeptide (Lys-Gly) (interchain with G-Cter in SUMO2) linkage. Residue S714 is modified to Phosphoserine. The segment at A748–C770 adopts a C2H2-type 4; atypical zinc-finger fold. Residues K763 and K785 each participate in a glycyl lysine isopeptide (Lys-Gly) (interchain with G-Cter in SUMO2) cross-link. A C2H2-type 5 zinc finger spans residues L775 to H798. The disordered stretch occupies residues T806–T840. Over residues V820 to E831 the composition is skewed to polar residues. A Glycyl lysine isopeptide (Lys-Gly) (interchain with G-Cter in SUMO2) cross-link involves residue K875. A Glycyl lysine isopeptide (Lys-Gly) (interchain with G-Cter in SUMO1); alternate cross-link involves residue K879. K879 participates in a covalent cross-link: Glycyl lysine isopeptide (Lys-Gly) (interchain with G-Cter in SUMO2); alternate. A disordered region spans residues K879–A906. Acidic residues predominate over residues P882 to P891. The segment at W909–C932 adopts a C2H2-type 6; atypical zinc-finger fold. Residue K935 forms a Glycyl lysine isopeptide (Lys-Gly) (interchain with G-Cter in SUMO2) linkage. The C2H2-type 7 zinc finger occupies F937–H959. The disordered stretch occupies residues A963 to A1014. Positions T979–K995 are enriched in pro residues. S1003 carries the post-translational modification Phosphoserine. The C2H2-type 8 zinc-finger motif lies at F1043–H1065.

Homodimer. Interacts with ZBTB14. Ubiquitous in fetal and adult tissues.

It is found in the nucleus. Its function is as follows. Acts as a transcription repressor. The chain is Zinc finger and BTB domain-containing protein 21 (ZBTB21) from Homo sapiens (Human).